The sequence spans 1551 residues: Pentafunctional AROM polypeptide 2 (1551 aa).

The interval 1 to 379 (MSIEKVSILG…YESKAHQIFK (379 aa)) is 3-dehydroquinate synthase. NAD(+) is bound by residues 42–44 (DTN), 80–83 (ENHK), 111–113 (GGV), and aspartate 116. Residue arginine 127 participates in 7-phospho-2-dehydro-3-deoxy-D-arabino-heptonate binding. An NAD(+)-binding site is contributed by 136–137 (TT). 7-phospho-2-dehydro-3-deoxy-D-arabino-heptonate contacts are provided by aspartate 143 and lysine 149. Lysine 158 is a binding site for NAD(+). Residue asparagine 159 participates in 7-phospho-2-dehydro-3-deoxy-D-arabino-heptonate binding. NAD(+) is bound by residues 176-179 (FLQT) and asparagine 187. Zn(2+) is bound at residue glutamate 191. Residues 191 to 194 (EVVK) and lysine 243 each bind 7-phospho-2-dehydro-3-deoxy-D-arabino-heptonate. Glutamate 253 (proton acceptor; for 3-dehydroquinate synthase activity) is an active-site residue. 7-phospho-2-dehydro-3-deoxy-D-arabino-heptonate is bound by residues 257 to 261 (RNLLN) and histidine 264. Histidine 264 is a Zn(2+) binding site. Histidine 268 (proton acceptor; for 3-dehydroquinate synthase activity) is an active-site residue. 7-phospho-2-dehydro-3-deoxy-D-arabino-heptonate is bound by residues histidine 280 and lysine 351. Histidine 280 is a binding site for Zn(2+). The EPSP synthase stretch occupies residues 392-835 (VHPFANRHPE…WDVLHSKFNA (444 aa)). The tract at residues 854-1044 (DRSIVIIGMR…LPATRSTFVT (191 aa)) is shikimate kinase. Position 861 to 868 (861 to 868 (GMRAAGKT)) interacts with ATP. The interval 1045–1258 (LTYPDLRKVP…IGVGQLSLKE (214 aa)) is 3-dehydroquinase. The Proton acceptor; for 3-dehydroquinate dehydratase activity role is filled by histidine 1162. Residue lysine 1191 is the Schiff-base intermediate with substrate; for 3-dehydroquinate dehydratase activity of the active site. Residues 1271–1551 (EKEFWVVGFP…KVIHSAVLNE (281 aa)) form a shikimate dehydrogenase region.

It in the N-terminal section; belongs to the sugar phosphate cyclases superfamily. Dehydroquinate synthase family. In the 2nd section; belongs to the EPSP synthase family. The protein in the 3rd section; belongs to the shikimate kinase family. This sequence in the 4th section; belongs to the type-I 3-dehydroquinase family. It in the C-terminal section; belongs to the shikimate dehydrogenase family. In terms of assembly, homodimer. Zn(2+) serves as cofactor.

It is found in the cytoplasm. It catalyses the reaction 7-phospho-2-dehydro-3-deoxy-D-arabino-heptonate = 3-dehydroquinate + phosphate. The catalysed reaction is 3-dehydroquinate = 3-dehydroshikimate + H2O. The enzyme catalyses shikimate + NADP(+) = 3-dehydroshikimate + NADPH + H(+). It carries out the reaction shikimate + ATP = 3-phosphoshikimate + ADP + H(+). It catalyses the reaction 3-phosphoshikimate + phosphoenolpyruvate = 5-O-(1-carboxyvinyl)-3-phosphoshikimate + phosphate. The protein operates within metabolic intermediate biosynthesis; chorismate biosynthesis; chorismate from D-erythrose 4-phosphate and phosphoenolpyruvate: step 2/7. It participates in metabolic intermediate biosynthesis; chorismate biosynthesis; chorismate from D-erythrose 4-phosphate and phosphoenolpyruvate: step 3/7. Its pathway is metabolic intermediate biosynthesis; chorismate biosynthesis; chorismate from D-erythrose 4-phosphate and phosphoenolpyruvate: step 4/7. It functions in the pathway metabolic intermediate biosynthesis; chorismate biosynthesis; chorismate from D-erythrose 4-phosphate and phosphoenolpyruvate: step 5/7. The protein operates within metabolic intermediate biosynthesis; chorismate biosynthesis; chorismate from D-erythrose 4-phosphate and phosphoenolpyruvate: step 6/7. Its function is as follows. The AROM polypeptide catalyzes 5 consecutive enzymatic reactions in prechorismate polyaromatic amino acid biosynthesis. This Lodderomyces elongisporus (strain ATCC 11503 / CBS 2605 / JCM 1781 / NBRC 1676 / NRRL YB-4239) (Yeast) protein is Pentafunctional AROM polypeptide 2.